A 181-amino-acid polypeptide reads, in one-letter code: Oligoribonuclease (181 aa).

The Exonuclease domain occupies 8-171 (LIWVDLEMTG…EDIKESIAEM (164 aa)). Residue Y129 is part of the active site.

This sequence belongs to the oligoribonuclease family.

The protein localises to the cytoplasm. In terms of biological role, 3'-to-5' exoribonuclease specific for small oligoribonucleotides. In Shewanella frigidimarina (strain NCIMB 400), this protein is Oligoribonuclease.